Reading from the N-terminus, the 823-residue chain is Protein Shroom1 (823 aa).

An N-acetylmethionine modification is found at Met1. Disordered regions lie at residues Met1 to Leu55, Pro72 to Gln110, and Ala124 to Gln159. Composition is skewed to polar residues over residues Arg28–Pro50 and Pro72–Pro85. Residues Ser103, Ser133, Ser137, Ser166, Ser190, and Ser224 each carry the phosphoserine modification. The ASD1 domain occupies Leu145–Gly233. The disordered stretch occupies residues Thr181–Arg200. Disordered stretches follow at residues Ser270–Lys303 and Gln349–Asp375. Residue Thr383 is modified to Phosphothreonine. Ser385 is subject to Phosphoserine. Disordered regions lie at residues Leu420–Gly503 and Glu566–Ala620. 3 stretches are compositionally biased toward polar residues: residues Arg444–Ser468, Ser489–Gly503, and Gln586–Ala620. The ASD2 domain maps to Glu517–Ser796.

Belongs to the shroom family. Interacts with F-actin.

The protein resides in the cytoplasm. The protein localises to the cytoskeleton. In terms of biological role, may be involved in the assembly of microtubule arrays during cell elongation. The chain is Protein Shroom1 (Shroom1) from Mus musculus (Mouse).